Reading from the N-terminus, the 215-residue chain is Guanylate kinase (215 aa).

Residues 6-185 (GAILVLSGPS…SEKLLLSIAR (180 aa)) enclose the Guanylate kinase-like domain. 13-20 (GPSGSGKS) provides a ligand contact to ATP.

The protein belongs to the guanylate kinase family.

It localises to the cytoplasm. It catalyses the reaction GMP + ATP = GDP + ADP. Functionally, essential for recycling GMP and indirectly, cGMP. In Wolinella succinogenes (strain ATCC 29543 / DSM 1740 / CCUG 13145 / JCM 31913 / LMG 7466 / NCTC 11488 / FDC 602W) (Vibrio succinogenes), this protein is Guanylate kinase.